Reading from the N-terminus, the 396-residue chain is Phosphoglycerate kinase (396 aa).

Substrate contacts are provided by residues 23–25 (DFN), Arg38, 61–64 (HMGK), Arg122, and Arg155. ATP is bound by residues Lys206, Gly296, Glu327, and 353 to 356 (GGDS).

This sequence belongs to the phosphoglycerate kinase family. As to quaternary structure, monomer.

Its subcellular location is the cytoplasm. The enzyme catalyses (2R)-3-phosphoglycerate + ATP = (2R)-3-phospho-glyceroyl phosphate + ADP. It participates in carbohydrate degradation; glycolysis; pyruvate from D-glyceraldehyde 3-phosphate: step 2/5. The sequence is that of Phosphoglycerate kinase from Clostridium botulinum (strain Eklund 17B / Type B).